A 520-amino-acid polypeptide reads, in one-letter code: 5'-nucleotidase domain-containing protein 2 (520 aa).

Catalysis depends on Asp73, which acts as the Nucleophile. Residues Asp73, Asp75, and Asp358 each coordinate Mg(2+). Catalysis depends on Asp75, which acts as the Proton donor.

Belongs to the 5'(3')-deoxyribonucleotidase family. As to quaternary structure, interacts with tyrosine 3-monooxygenase TH; the interaction results in reduced phosphorylation and decreased catalytic activity of TH.

It localises to the cytoplasm. Functionally, promotes dephosphorylation of tyrosine 3-monooxygenase TH which decreases TH catalytic activity and leads to reduced synthesis of catecholamines including dopamine, noradrenaline and adrenaline. The exact mechanism of activity is unknown but may act as a phosphatase or promote the activity of phosphatases or may inhibit phosphorylation by acting as a barrier to interfere with protein kinase access. This chain is 5'-nucleotidase domain-containing protein 2 (NT5DC2), found in Homo sapiens (Human).